The primary structure comprises 129 residues: MSRKESRVQAFQTLFQLEMKDSDLTINEAISFIKDGNPDLDFEFIHWLVSGVKDHEPVLDETISPYLKDWTIARLLKTDRIILRMATYEILHSDTPAKVVMNEAVELTKQFSDDDHYKFINGVLSNIKK.

It belongs to the NusB family.

Its function is as follows. Involved in transcription antitermination. Required for transcription of ribosomal RNA (rRNA) genes. Binds specifically to the boxA antiterminator sequence of the ribosomal RNA (rrn) operons. The polypeptide is Transcription antitermination protein NusB (Staphylococcus aureus (strain bovine RF122 / ET3-1)).